A 215-amino-acid polypeptide reads, in one-letter code: Myelin protein zero-like protein 2 (215 aa).

The signal sequence occupies residues 1–26 (MYGKSPTRAVLFLLGLQLTALWPTAA). Residues 27–141 (VEIYTPRVLE…DGLIGEIQLS (115 aa)) enclose the Ig-like V-type domain. Over 27 to 154 (VEIYTPRVLE…TVRFSEIHFL (128 aa)) the chain is Extracellular. 2 N-linked (GlcNAc...) asparagine glycosylation sites follow: Asn39 and Asn118. A disulfide bridge links Cys47 with Cys123. A helical membrane pass occupies residues 155 to 175 (ALAIGSACALMVIIVIVVVLF). Topologically, residues 176–215 (QHFRKKRRAERAHRVVEIKSKEEEKLNQEKKASVSLEYTD) are cytoplasmic.

This sequence belongs to the myelin P0 protein family.

The protein localises to the membrane. Mediates homophilic cell-cell adhesion. The polypeptide is Myelin protein zero-like protein 2 (MPZL2) (Bos taurus (Bovine)).